Consider the following 205-residue polypeptide: Protein Nef (205 aa).

G2 is lipidated: N-myristoyl glycine; by host. S6 carries the post-translational modification Phosphoserine; by host. Residues 62 to 65 (DNEE) form an acidic; interacts with host PACS1 and PACS2; stabilizes the interaction of NEF/MHC-I with host AP1M1; necessary for MHC-I internalization region. The interval 69–78 (PVRPQVPTRP) is SH3-binding; interaction with Src family tyrosine kinases. Residues 72-75 (PQVP) carry the PxxP; stabilizes the interaction of NEF/MHC-I with host AP1M1; necessary for MHC-I internalization motif. Residues 108–124 (EILDLWVYHTQGFFPDW) are mediates dimerization, Nef-PTE1 interaction. Residues 148-180 (LTEEQVEQANEGDNNCLLHPICQHGMEDEDKEV) are binding to ATP6V1H. The Dileucine internalization motif; necessary for CD4 internalization motif lies at 164 to 165 (LL). Residues 174-175 (ED) carry the Diacidic; necessary for CD4 internalization motif.

Belongs to the lentivirus primate group Nef protein family. As to quaternary structure, monomer; cytosolic form. Homodimer; membrane bound form. Interacts with Nef associated p21-activated kinase (PAK2); this interaction activates PAK2. Associates with the Nef-MHC-I-AP1 complex; this complex is required for MHC-I internalization. Interacts (via C-terminus) with host PI3-kinase. Interacts with host PACS1; this interaction seems to be weak. Interacts with host PACS2. Interacts with host LCK and MAPK3; these interactions inhibit the kinase activity of the latter. Interacts with host ATP6V1H; this interaction may play a role in CD4 endocytosis. Associates with the CD4-Nef-AP2 complex; this complex is required for CD4 internalization. Interacts with host AP2 subunit alpha and AP2 subunit sigma2. Interacts with TCR-zeta chain; this interaction up-regulates the Fas ligand (FasL) surface expression. Interacts with host HCK, LYN, and SRC; these interactions activate the Src family kinases. Interacts with MAP3K5; this interaction inhibits the Fas and TNFR-mediated death signals. Interacts with beta-COP and PTE1. Interacts with human RACK1; this increases Nef phosphorylation by PKC. Interacts with TP53; this interaction decreases the half-life of TP53, protecting the infected cell against p53-mediated apoptosis. In terms of processing, the virion-associated Nef proteins are cleaved by the viral protease to release the soluble C-terminal core protein. Nef is probably cleaved concomitantly with viral structural proteins on maturation of virus particles. Myristoylated. Post-translationally, phosphorylated on serine residues, probably by host PKCdelta and theta.

It localises to the host cell membrane. It is found in the virion. Its subcellular location is the secreted. The protein resides in the host Golgi apparatus membrane. Its function is as follows. Factor of infectivity and pathogenicity, required for optimal virus replication. Alters numerous pathways of T-lymphocyte function and down-regulates immunity surface molecules in order to evade host defense and increase viral infectivity. Alters the functionality of other immunity cells, like dendritic cells, monocytes/macrophages and NK cells. In infected CD4(+) T-lymphocytes, down-regulates the surface MHC-I, mature MHC-II, CD4, CD28, CCR5 and CXCR4 molecules. Mediates internalization and degradation of host CD4 through the interaction of with the cytoplasmic tail of CD4, the recruitment of AP-2 (clathrin adapter protein complex 2), internalization through clathrin coated pits, and subsequent transport to endosomes and lysosomes for degradation. Diverts host MHC-I molecules to the trans-Golgi network-associated endosomal compartments by an endocytic pathway to finally target them for degradation. MHC-I down-regulation may involve AP-1 (clathrin adapter protein complex 1) or possibly Src family kinase-ZAP70/Syk-PI3K cascade recruited by PACS2. In consequence infected cells are masked for immune recognition by cytotoxic T-lymphocytes. Decreasing the number of immune receptors also prevents reinfection by more HIV particles (superinfection). Down-regulates host SERINC3 and SERINC5 thereby excluding these proteins from the viral particles. Virion infectivity is drastically higher when SERINC3 or SERINC5 are excluded from the viral envelope, because these host antiviral proteins impair the membrane fusion event necessary for subsequent virion penetration. Functionally, bypasses host T-cell signaling by inducing a transcriptional program nearly identical to that of anti-CD3 cell activation. Interaction with TCR-zeta chain up-regulates the Fas ligand (FasL). Increasing surface FasL molecules and decreasing surface MHC-I molecules on infected CD4(+) cells send attacking cytotoxic CD8+ T-lymphocytes into apoptosis. In terms of biological role, plays a role in optimizing the host cell environment for viral replication without causing cell death by apoptosis. Protects the infected cells from apoptosis in order to keep them alive until the next virus generation is ready to strike. Inhibits the Fas and TNFR-mediated death signals by blocking MAP3K5/ASK1. Decreases the half-life of TP53, protecting the infected cell against p53-mediated apoptosis. Inhibits the apoptotic signals regulated by the Bcl-2 family proteins through the formation of a Nef/PI3-kinase/PAK2 complex that leads to activation of PAK2 and induces phosphorylation of host BAD. Its function is as follows. Extracellular Nef protein targets CD4(+) T-lymphocytes for apoptosis by interacting with CXCR4 surface receptors. The polypeptide is Protein Nef (Simian immunodeficiency virus (isolate CPZ GAB1) (SIV-cpz)).